The chain runs to 449 residues: Ribulose bisphosphate carboxylase large chain (449 aa).

Lys-7 bears the N6,N6,N6-trimethyllysine mark. Substrate contacts are provided by Asn-116 and Thr-166. Residue Lys-168 is the Proton acceptor of the active site. Lys-170 contributes to the substrate binding site. Positions 194, 196, and 197 each coordinate Mg(2+). Position 194 is an N6-carboxylysine (Lys-194). His-287 serves as the catalytic Proton acceptor. Positions 288, 320, and 372 each coordinate substrate.

This sequence belongs to the RuBisCO large chain family. Type I subfamily. As to quaternary structure, heterohexadecamer of 8 large chains and 8 small chains; disulfide-linked. The disulfide link is formed within the large subunit homodimers. The cofactor is Mg(2+). In terms of processing, the disulfide bond which can form in the large chain dimeric partners within the hexadecamer appears to be associated with oxidative stress and protein turnover.

The protein resides in the plastid. It is found in the chloroplast. The enzyme catalyses 2 (2R)-3-phosphoglycerate + 2 H(+) = D-ribulose 1,5-bisphosphate + CO2 + H2O. The catalysed reaction is D-ribulose 1,5-bisphosphate + O2 = 2-phosphoglycolate + (2R)-3-phosphoglycerate + 2 H(+). In terms of biological role, ruBisCO catalyzes two reactions: the carboxylation of D-ribulose 1,5-bisphosphate, the primary event in carbon dioxide fixation, as well as the oxidative fragmentation of the pentose substrate in the photorespiration process. Both reactions occur simultaneously and in competition at the same active site. The polypeptide is Ribulose bisphosphate carboxylase large chain (Aspidistra elatior (Cast-iron plant)).